A 261-amino-acid chain; its full sequence is Proteasome subunit alpha type-4 (261 aa).

Residues Ser-13 and Ser-75 each carry the phosphoserine modification. N6-acetyllysine is present on Lys-127. Ser-173 is modified (phosphoserine). An N6-acetyllysine modification is found at Lys-176. The interval 240–261 is disordered; the sequence is HEEEEAKAEREKKEKEQKEKDK.

This sequence belongs to the peptidase T1A family. As to quaternary structure, the 26S proteasome consists of a 20S proteasome core and two 19S regulatory subunits. The 20S proteasome core is a barrel-shaped complex made of 28 subunits that are arranged in four stacked rings. The two outer rings are each formed by seven alpha subunits, and the two inner rings are formed by seven beta subunits. The proteolytic activity is exerted by three beta-subunits PSMB5, PSMB6 and PSMB7.

It localises to the cytoplasm. Its subcellular location is the nucleus. In terms of biological role, component of the 20S core proteasome complex involved in the proteolytic degradation of most intracellular proteins. This complex plays numerous essential roles within the cell by associating with different regulatory particles. Associated with two 19S regulatory particles, forms the 26S proteasome and thus participates in the ATP-dependent degradation of ubiquitinated proteins. The 26S proteasome plays a key role in the maintenance of protein homeostasis by removing misfolded or damaged proteins that could impair cellular functions, and by removing proteins whose functions are no longer required. Associated with the PA200 or PA28, the 20S proteasome mediates ubiquitin-independent protein degradation. This type of proteolysis is required in several pathways including spermatogenesis (20S-PA200 complex) or generation of a subset of MHC class I-presented antigenic peptides (20S-PA28 complex). This chain is Proteasome subunit alpha type-4 (PSMA4), found in Bos taurus (Bovine).